The chain runs to 150 residues: Ribonuclease K6 (150 aa).

Residues 1–23 form the signal peptide; that stretch reads MVLCFPLLLLLLVLWGPVCLLHA. The Proton acceptor role is filled by H38. Disulfide bonds link C46-C104, C60-C114, C78-C129, and C85-C92. The N-linked (GlcNAc...) asparagine glycan is linked to N55. Substrate-binding positions include 61–65 and K86; that span reads KHQNT. N-linked (GlcNAc...) asparagine glycosylation is present at N100. Position 105 (R105) interacts with substrate. The active-site Proton donor is the H145.

The protein belongs to the pancreatic ribonuclease family. In terms of assembly, interacts (via N-terminus) with bacterial lipopolysaccharide (LPS).

The protein resides in the secreted. Its subcellular location is the lysosome. It localises to the cytoplasmic granule. Functionally, ribonuclease which shows a preference for the pyrimidines uridine and cytosine. Has potent antibacterial activity against a range of Gram-positive and Gram-negative bacteria, including P.aeruginosa, A.baumanii, M.luteus, S.aureus, E.faecalis, E.faecium, S.saprophyticus and E.coli. Causes loss of bacterial membrane integrity, and also promotes agglutination of Gram-negative bacteria. Probably contributes to urinary tract sterility. Bactericidal activity is independent of RNase activity. This is Ribonuclease K6 (RNASE6) from Chlorocebus aethiops (Green monkey).